The chain runs to 897 residues: Beta-galactosidase (897 aa).

The Proton donor role is filled by Glu459. Catalysis depends on Glu525, which acts as the Nucleophile.

The protein belongs to the glycosyl hydrolase 2 family.

The enzyme catalyses Hydrolysis of terminal non-reducing beta-D-galactose residues in beta-D-galactosides.. This chain is Beta-galactosidase (cbgA), found in Clostridium acetobutylicum.